A 499-amino-acid chain; its full sequence is Hexokinase-2, chloroplastic (499 aa).

The N-terminal 30 residues, 1 to 30 (MSVTVSSPAGRSFHISRSPYKKISKPRVII), are a transit peptide targeting the chloroplast. One can recognise a Hexokinase domain in the interval 39-490 (LAVAPILTKL…SGIGAALLAA (452 aa)). The segment at 94-232 (TGNEKGLFYA…GLGMQVSALV (139 aa)) is hexokinase small subdomain. ADP is bound by residues glycine 108, threonine 109, and asparagine 110. Threonine 198, lysine 199, asparagine 233, and aspartate 234 together coordinate D-glucose. Residues 233-479 (NDTVATLAGA…KNVVIEHSKD (247 aa)) form a hexokinase large subdomain region. Threonine 257 is a binding site for ADP. Residues asparagine 260, glutamate 288, and glutamate 318 each coordinate D-glucose. Glycine 444 is an ADP binding site.

The protein belongs to the hexokinase family. In terms of tissue distribution, expressed in vascular starch sheath, xylem parenchyma, guard cells and root tips.

It is found in the plastid. It localises to the chloroplast stroma. The enzyme catalyses a D-hexose + ATP = a D-hexose 6-phosphate + ADP + H(+). It carries out the reaction D-fructose + ATP = D-fructose 6-phosphate + ADP + H(+). The catalysed reaction is D-glucose + ATP = D-glucose 6-phosphate + ADP + H(+). It functions in the pathway carbohydrate metabolism; hexose metabolism. It participates in carbohydrate degradation; glycolysis; D-glyceraldehyde 3-phosphate and glycerone phosphate from D-glucose: step 1/4. In terms of biological role, fructose and glucose phosphorylating enzyme. This chain is Hexokinase-2, chloroplastic (HXK2), found in Nicotiana tabacum (Common tobacco).